We begin with the raw amino-acid sequence, 161 residues long: TM2 domain-containing protein DDB_G0278163 (161 aa).

The Cytoplasmic portion of the chain corresponds to 1-24; the sequence is MGHHHHHHGGSGHHHHHHHHGSGH. Residues 25-45 form a helical membrane-spanning segment; it reads YGGGAVLVTPIVTPVPVVYGS. At 46–54 the chain is on the extracellular side; it reads RSSSYCPKS. A TM2 domain is found at 52–100; the sequence is PKSMTVAYVLWFFFGILGFHRLYLGRVGTFFLYFFTAGVFGLGWLFDAF. The chain crosses the membrane as a helical span at residues 55–75; it reads MTVAYVLWFFFGILGFHRLYL. The Cytoplasmic segment spans residues 76–80; that stretch reads GRVGT. The chain crosses the membrane as a helical span at residues 81-101; it reads FFLYFFTAGVFGLGWLFDAFY. Residues 102-161 are Extracellular-facing; it reads THKMVKHYNECEFTKSCVGQSPPATIPIYQSEGAYPTYQQVPQQPPQFYQPQQQQPQYQP. The disordered stretch occupies residues 139 to 161; that stretch reads YQQVPQQPPQFYQPQQQQPQYQP.

The protein belongs to the TM2 family.

It is found in the membrane. This Dictyostelium discoideum (Social amoeba) protein is TM2 domain-containing protein DDB_G0278163.